A 477-amino-acid polypeptide reads, in one-letter code: MRGGYYVLTALFVVASSEIAAESGHQLQANNHGRKIDDDAAMKSLSTRFLRESRGVHGNVANEERSVYSVLAGMINEGIKKMPRTAEVLKRKSRVIDPSDKIPHEAKLVEEMFHAAKAKETMESAEEYNELKTATEDAEKALKKHWNPSKTAVKGDDSHDIHSNEMLSVKNWWVDFTGLKSTVVDDTQDDMVDSVHNAFVTVCDKNIKPTREETSFLSRLLNWKVANSPRSVHKQRLIQRAQRYVILDLWKMQNTCKVWPEWEKLSDTLKFSVLDYLLNLHYQRLVRMYNIFARKRPDRNPAPLNPELNLVGNTGTSAAMAVNKNSKGQIPYPSEPLNAASTSKGERFHLIKRSKRTSDGNTDIASLPSIRSKVRSSKSVMPLLTESTTSGDHSVPAKRSRFSSSGLSRAFSPYKPGDHTFITENSRLSFDGPRSAVDPYTQSKKHSTKALAPSSTVFTPEDVDTKLSLGGIYDRST.

Positions 1-20 (MRGGYYVLTALFVVASSEIA) are cleaved as a signal peptide. A RxLR-dEER motif is present at residues 48–65 (RFLRESRGVHGNVANEER). 4 disordered regions span residues 326 to 345 (SKGQ…TSKG), 351 to 370 (IKRS…LPSI), 376 to 401 (SSKS…KRSR), and 433 to 455 (PRSA…APSS).

Belongs to the RxLR effector family.

The protein localises to the secreted. The protein resides in the host nucleus. Secreted effector that acts as an elicitor that induces cell death in host plant cells. The protein is Secreted RxLR effector protein 102 of Plasmopara viticola (Downy mildew of grapevine).